The following is a 207-amino-acid chain: uncharacterized protein (207 aa).

Disordered regions lie at residues 1–81 (MNPT…GNTR) and 140–169 (TSQS…PPKK). The span at 21–40 (FEQTNSSASLTQKNSSSETE) shows a compositional bias: polar residues. A compositionally biased stretch (basic residues) spans 58–70 (PTKRGSGRGRGRS). Positions 140 to 152 (TSQSIDAQPTPSQ) are enriched in polar residues. Residues 156–165 (AHHEPHEKRG) show a composition bias toward basic and acidic residues.

Its subcellular location is the nucleus. It is found in the nucleolus. This is an uncharacterized protein from Schizosaccharomyces pombe (strain 972 / ATCC 24843) (Fission yeast).